A 172-amino-acid chain; its full sequence is Centrin-2 (172 aa).

Positions M1–Q31 are disordered. At A2 the chain carries N-acetylalanine. Residues A2 to L25 form a required for self-assembly region. Position 20 is a phosphoserine (S20). K22 participates in a covalent cross-link: Glycyl lysine isopeptide (Lys-Gly) (interchain with G-Cter in SUMO2). Residue T26 is modified to Phosphothreonine. 4 EF-hand domains span residues E28–E63, P64–E99, D101–N136, and L137–Y172. The Ca(2+) site is built by D41, D43, T45, T47, and E52. The Ca(2+) site is built by D150, D152, D154, E156, and E161.

The protein belongs to the centrin family. As to quaternary structure, monomer. Homooligomer. Interacts with CCP110, SFI1. Component of the XPC complex composed of XPC, RAD23B and CETN2. Component of the nuclear pore complex (NPC)-associated TREX-2 complex (transcription and export complex 2), composed of at least GANP, 2 copies of ENY2, PCID2, SEM1/DSS1, and either centrin CETN2 or centrin CETN3. The TREX-2 complex also associates with ALYREF/ALY and with the nucleoporin NUP153. Interacts with USP49. Forms a microtubule-associated complex with POC5, POC1B and FAM161A. Interacts with CCDC15.

It is found in the cytoplasm. The protein resides in the cytoskeleton. Its subcellular location is the microtubule organizing center. The protein localises to the centrosome. It localises to the centriole. It is found in the nucleus. The protein resides in the nucleus envelope. Its subcellular location is the nuclear pore complex. Plays a fundamental role in microtubule organizing center structure and function. Required for centriole duplication and correct spindle formation. Has a role in regulating cytokinesis and genome stability via cooperation with CALM1 and CCP110. Functionally, involved in global genome nucleotide excision repair (GG-NER) by acting as component of the XPC complex. Cooperatively with RAD23B appears to stabilize XPC. In vitro, stimulates DNA binding of the XPC:RAD23B dimer. Its function is as follows. The XPC complex is proposed to represent the first factor bound at the sites of DNA damage and together with other core recognition factors, XPA, RPA and the TFIIH complex, is part of the pre-incision (or initial recognition) complex. The XPC complex recognizes a wide spectrum of damaged DNA characterized by distortions of the DNA helix such as single-stranded loops, mismatched bubbles or single-stranded overhangs. The orientation of XPC complex binding appears to be crucial for inducing a productive NER. XPC complex is proposed to recognize and to interact with unpaired bases on the undamaged DNA strand which is followed by recruitment of the TFIIH complex and subsequent scanning for lesions in the opposite strand in a 5'-to-3' direction by the NER machinery. Cyclobutane pyrimidine dimers (CPDs) which are formed upon UV-induced DNA damage esacpe detection by the XPC complex due to a low degree of structural perurbation. Instead they are detected by the UV-DDB complex which in turn recruits and cooperates with the XPC complex in the respective DNA repair. In terms of biological role, as a component of the TREX-2 complex, involved in the export of mRNAs to the cytoplasm through the nuclear pores. This Bos taurus (Bovine) protein is Centrin-2 (CETN2).